Here is a 296-residue protein sequence, read N- to C-terminus: uncharacterized protein (296 aa).

Its subcellular location is the mitochondrion. This is an uncharacterized protein from Podospora anserina (strain S / ATCC MYA-4624 / DSM 980 / FGSC 10383) (Pleurage anserina).